Reading from the N-terminus, the 315-residue chain is Glutamyl-Q tRNA(Asp) synthetase (315 aa).

L-glutamate is bound by residues arginine 12–serine 16 and glutamate 48. A 'HIGH' region motif is present at residues proline 15–serine 25. The Zn(2+) site is built by cysteine 104, cysteine 106, tyrosine 124, and cysteine 128. L-glutamate is bound by residues tyrosine 181 and arginine 199. Residues lysine 237–glutamine 241 carry the 'KMSKS' region motif. ATP is bound at residue lysine 240.

The protein belongs to the class-I aminoacyl-tRNA synthetase family. GluQ subfamily. Zn(2+) serves as cofactor.

Functionally, catalyzes the tRNA-independent activation of glutamate in presence of ATP and the subsequent transfer of glutamate onto a tRNA(Asp). Glutamate is transferred on the 2-amino-5-(4,5-dihydroxy-2-cyclopenten-1-yl) moiety of the queuosine in the wobble position of the QUC anticodon. This is Glutamyl-Q tRNA(Asp) synthetase from Aromatoleum aromaticum (strain DSM 19018 / LMG 30748 / EbN1) (Azoarcus sp. (strain EbN1)).